The chain runs to 270 residues: 3-methyl-2-oxobutanoate hydroxymethyltransferase (270 aa).

The Mg(2+) site is built by Asp50 and Asp89. 3-methyl-2-oxobutanoate contacts are provided by residues 50–51 (DS), Asp89, and Lys118. Glu120 provides a ligand contact to Mg(2+). The active-site Proton acceptor is the Glu187.

The protein belongs to the PanB family. In terms of assembly, homodecamer; pentamer of dimers. Mg(2+) serves as cofactor.

It is found in the cytoplasm. It carries out the reaction 3-methyl-2-oxobutanoate + (6R)-5,10-methylene-5,6,7,8-tetrahydrofolate + H2O = 2-dehydropantoate + (6S)-5,6,7,8-tetrahydrofolate. It functions in the pathway cofactor biosynthesis; (R)-pantothenate biosynthesis; (R)-pantoate from 3-methyl-2-oxobutanoate: step 1/2. In terms of biological role, catalyzes the reversible reaction in which hydroxymethyl group from 5,10-methylenetetrahydrofolate is transferred onto alpha-ketoisovalerate to form ketopantoate. The protein is 3-methyl-2-oxobutanoate hydroxymethyltransferase of Helicobacter pylori (strain HPAG1).